The primary structure comprises 477 residues: MLRWLRGFVLPTAACQDVEPPTRYETLFQKLDRNGDGVVDISELQEGLKSLGIPLGQDAEEKIFTTGDVNKDGKLDFEEFMKYLKDHEKKMKLAFKSLDKNNDGKIEASEIVQSLQILGLTISEQQAELILQSIDADGTMTVDWNEWRDYFLFNPVTDIEEIIRFWKHSTGIDIGDSLTIPDEFTEDEKKSGQWWRQLLAGGVAGAVSRTSTAPLDRLKVMMQVHGSKSAKMNIYGGFQQMVKEGGIRSLWRGNGTNVIKIAPETAVKFWAYEQYKKLLTEEGQKIGTFERFVSGSMAGATAQTFIYPMEVLKTRLAVGKTGQYSGMFDCAKKILKYEGMGAFYKGYVPNLLGIIPYAGIDLAVYELLKSHWLDNFAKDSVNPGVMVLLGCGALSSTCGQLASYPLALVRTRMQAQAMIEKSPQLNMVGLFRRILSKEGLPGLYRGITPNFMKVLPAVGISYVVYENMKQTLGVTQK.

Residues 1 to 173 (MLRWLRGFVL…RFWKHSTGID (173 aa)) form a regulatory N-terminal domain region. At 1–197 (MLRWLRGFVL…EKKSGQWWRQ (197 aa)) the chain is on the mitochondrial intermembrane side. EF-hand domains follow at residues 19–54 (EPPT…LGIP), 61–85 (EKIF…KYLK), 86–121 (DHEK…LGLT), and 122–157 (ISEQ…NPVT). Residues D32, N34, D36, V38, E43, D68, N70, D72, K74, E79, D99, N101, D103, K105, E110, D135, D137, T139, T141, and E146 each coordinate Ca(2+). The interval 159 to 168 (IEEIIRFWKH) is linker region. The tract at residues 174–477 (IGDSLTIPDE…MKQTLGVTQK (304 aa)) is C-terminal transmembrane transporter domain. Solcar repeat units lie at residues 192–278 (GQWW…YKKL), 286–371 (IGTF…LKSH), and 383–471 (PGVM…MKQT). The chain crosses the membrane as a helical span at residues 198 to 215 (LLAGGVAGAVSRTSTAPL). The Mitochondrial matrix segment spans residues 216–252 (DRLKVMMQVHGSKSAKMNIYGGFQQMVKEGGIRSLWR). Residues 253–272 (GNGTNVIKIAPETAVKFWAY) traverse the membrane as a helical segment. Over 273-295 (EQYKKLLTEEGQKIGTFERFVSG) the chain is Mitochondrial intermembrane. The chain crosses the membrane as a helical span at residues 296-309 (SMAGATAQTFIYPM). At 310–345 (EVLKTRLAVGKTGQYSGMFDCAKKILKYEGMGAFYK) the chain is on the mitochondrial matrix side. K320 carries the post-translational modification N6-acetyllysine; alternate. K320 carries the post-translational modification N6-succinyllysine; alternate. Residue K336 is modified to N6-acetyllysine. The chain crosses the membrane as a helical span at residues 346-365 (GYVPNLLGIIPYAGIDLAVY). Over 366–388 (ELLKSHWLDNFAKDSVNPGVMVL) the chain is Mitochondrial intermembrane. The helical transmembrane segment at 389-406 (LGCGALSSTCGQLASYPL) threads the bilayer. The Mitochondrial matrix segment spans residues 407–445 (ALVRTRMQAQAMIEKSPQLNMVGLFRRILSKEGLPGLYR). K437 carries the post-translational modification N6-acetyllysine; alternate. K437 carries the post-translational modification N6-succinyllysine; alternate. Residues 446–465 (GITPNFMKVLPAVGISYVVY) traverse the membrane as a helical segment. Topologically, residues 466-477 (ENMKQTLGVTQK) are mitochondrial intermembrane.

It belongs to the mitochondrial carrier (TC 2.A.29) family. In terms of assembly, monomer.

Its subcellular location is the mitochondrion inner membrane. It carries out the reaction Mg(2+)(out) + phosphate(in) + ATP(out) = Mg(2+)(in) + phosphate(out) + ATP(in). The catalysed reaction is ADP(out) + phosphate(in) + H(+)(out) = ADP(in) + phosphate(out) + H(+)(in). It catalyses the reaction AMP(out) + phosphate(in) = AMP(in) + phosphate(out). The enzyme catalyses phosphate(in) + ATP(out) + 2 H(+)(out) = phosphate(out) + ATP(in) + 2 H(+)(in). It carries out the reaction dADP(in) + ADP(out) = dADP(out) + ADP(in). The catalysed reaction is Mg(2+)(in) + ADP(out) + ATP(in) + H(+)(out) = Mg(2+)(out) + ADP(in) + ATP(out) + H(+)(in). It catalyses the reaction ADP(out) + diphosphate(in) = ADP(in) + diphosphate(out). The enzyme catalyses dAMP(in) + ADP(out) + H(+)(out) = dAMP(out) + ADP(in) + H(+)(in). It carries out the reaction 3'-AMP(in) + ADP(out) + H(+)(out) = 3'-AMP(out) + ADP(in) + H(+)(in). The catalysed reaction is dAMP(out) + phosphate(in) = dAMP(in) + phosphate(out). It catalyses the reaction 3'-AMP(out) + phosphate(in) = 3'-AMP(in) + phosphate(out). The enzyme catalyses dADP(out) + phosphate(in) + H(+)(out) = dADP(in) + phosphate(out) + H(+)(in). With respect to regulation, activated by an increase in cytosolic calcium levels that induce a conformational change of the N-terminal regulatory domain, uncapping the channel and allowing transport. Inhibited by bathophenanthroline, mersalyl, p-hydroxymercuribenzoate, bromcresol purple and tannic acid. Electroneutral antiporter that mediates the transport of adenyl nucleotides through the inner mitochondrial membrane. Originally identified as an ATP-magnesium/inorganic phosphate antiporter, it also acts as a broad specificity adenyl nucleotide antiporter. By regulating the mitochondrial matrix adenyl nucleotide pool could adapt to changing cellular energetic demands and indirectly regulate adenyl nucleotide-dependent metabolic pathways. In vitro, a low activity is also observed with guanyl and pyrimidine nucleotides. May play a role in protecting cells against oxidative stress-induced cell death, by buffering calcium levels in the mitochondrial matrix through the formation of calcium-phosphate precipitates. The sequence is that of Mitochondrial adenyl nucleotide antiporter SLC25A24 (SLC25A24) from Bos taurus (Bovine).